Here is a 165-residue protein sequence, read N- to C-terminus: uncharacterized protein (165 aa).

This is an uncharacterized protein from Escherichia coli (strain K12).